A 351-amino-acid polypeptide reads, in one-letter code: UDP-3-O-acylglucosamine N-acyltransferase (351 aa).

His240 (proton acceptor) is an active-site residue.

This sequence belongs to the transferase hexapeptide repeat family. LpxD subfamily. In terms of assembly, homotrimer.

The enzyme catalyses a UDP-3-O-[(3R)-3-hydroxyacyl]-alpha-D-glucosamine + a (3R)-hydroxyacyl-[ACP] = a UDP-2-N,3-O-bis[(3R)-3-hydroxyacyl]-alpha-D-glucosamine + holo-[ACP] + H(+). Its pathway is bacterial outer membrane biogenesis; LPS lipid A biosynthesis. In terms of biological role, catalyzes the N-acylation of UDP-3-O-acylglucosamine using 3-hydroxyacyl-ACP as the acyl donor. Is involved in the biosynthesis of lipid A, a phosphorylated glycolipid that anchors the lipopolysaccharide to the outer membrane of the cell. The chain is UDP-3-O-acylglucosamine N-acyltransferase from Pseudomonas fluorescens (strain SBW25).